Reading from the N-terminus, the 34-residue chain is MSDIN-like toxin proprotein 3 (34 aa).

The propeptide occupies 1–10 (MSDINVIRAP). The cyclopeptide (Leu-Pro) cross-link spans 11 to 18 (LLILSILP). A propeptide spanning residues 19-34 (CVGDDIEVLRRGEGLS) is cleaved from the precursor.

Belongs to the MSDIN fungal toxin family. In terms of processing, processed by the macrocyclase-peptidase enzyme POPB to yield a toxic cyclic octapeptide. POPB first removes 10 residues from the N-terminus. Conformational trapping of the remaining peptide forces the enzyme to release this intermediate rather than proceed to macrocyclization. The enzyme rebinds the remaining peptide in a different conformation and catalyzes macrocyclization of the N-terminal 8 residues. In terms of tissue distribution, expressed in basidiocarps.

In terms of biological role, probable toxin that belongs to the MSDIN-like toxin family responsible for a large number of food poisoning cases and deaths. The polypeptide is MSDIN-like toxin proprotein 3 (Amanita exitialis (Guangzhou destroying angel)).